Reading from the N-terminus, the 200-residue chain is NADH-quinone oxidoreductase subunit C (200 aa).

This sequence belongs to the complex I 30 kDa subunit family. NDH-1 is composed of 14 different subunits. Subunits NuoB, C, D, E, F, and G constitute the peripheral sector of the complex.

It localises to the cell inner membrane. The enzyme catalyses a quinone + NADH + 5 H(+)(in) = a quinol + NAD(+) + 4 H(+)(out). Its function is as follows. NDH-1 shuttles electrons from NADH, via FMN and iron-sulfur (Fe-S) centers, to quinones in the respiratory chain. The immediate electron acceptor for the enzyme in this species is believed to be ubiquinone. Couples the redox reaction to proton translocation (for every two electrons transferred, four hydrogen ions are translocated across the cytoplasmic membrane), and thus conserves the redox energy in a proton gradient. The chain is NADH-quinone oxidoreductase subunit C from Rhizobium rhizogenes (strain K84 / ATCC BAA-868) (Agrobacterium radiobacter).